A 927-amino-acid polypeptide reads, in one-letter code: Lysine-specific demethylase JMJ28 (927 aa).

A WRC domain is found at 7–52; it reads VPDEFRCNRSDGKQWRCKRRALEGKKMCESHHSQQSLKRSKQKVAE. Positions 30–37 match the Nuclear localization signal 1 motif; the sequence is GKKMCESH. The tract at residues 30–92 is disordered; that stretch reads GKKMCESHHS…RLGKSKRKRV (63 aa). Over residues 80–91 the composition is skewed to basic residues; the sequence is RSKRLGKSKRKR. Positions 127 to 134 match the Nuclear localization signal 2 motif; it reads EKRKRLPN. Zn(2+)-binding residues include Cys-227, Cys-230, Cys-241, Cys-244, Cys-250, Cys-253, Cys-269, and Cys-272. An RING-type; degenerate zinc finger spans residues 227–273; that stretch reads CHWCGTRGFGDLISCLSCEREFFCIDCIEKRNKGSKEEVEKKCPVCR. Residues 330–339 are compositionally biased toward basic and acidic residues; it reads ENDAEKKEGN. Disordered stretches follow at residues 330–359 and 701–736; these read ENDA…QPCS and RSKN…SQHC. The region spanning 601–881 is the JmjC domain; it reads FPNHYAEILN…ESIKRVKELN (281 aa).

This sequence belongs to the JARID1 histone demethylase family. In terms of assembly, interacts with the FBH transcription factors FBH1, FBH2, FBH3 and FBH4. It depends on Fe(2+) as a cofactor. Expressed in inflorescences, flowers, roots, siliques, leaves and stems, especially in the vasculature (mainly phloem), with highest levels in floral organs. Present at high levels in flowers, shoot apex and young seeds, but observed at low levels in dry seeds, root apex and anthers.

It localises to the nucleus. Functionally, may function as histone H3 lysine demethylase and be involved in regulation of gene expression. Regulates flowering time by promoting CONSTANS (CO) and CONSTANS-LIKE genes (e.g. COL2 and COL5) expression via interaction with FBH transcription factors (FBH1, FBH2, FBH3 and FBH4) at their loci to remove H3K9me2 repressive histone marks. Also modulates the expression of several developmental genes such as MYB30, TFS1, AGL6 and RVE2. The sequence is that of Lysine-specific demethylase JMJ28 from Arabidopsis thaliana (Mouse-ear cress).